The primary structure comprises 969 residues: RNA polymerase-associated protein RapA (969 aa).

A Helicase ATP-binding domain is found at 164 to 334 (EVGRRYAPRV…FARLRLLDPD (171 aa)). 177-184 (DEVGLGKT) provides a ligand contact to ATP. A DEAH box motif is present at residues 280–283 (DEAH). In terms of domain architecture, Helicase C-terminal spans 492-672 (RVNWLLELLK…GLEPLIEESA (181 aa)).

This sequence belongs to the SNF2/RAD54 helicase family. RapA subfamily. As to quaternary structure, interacts with the RNAP. Has a higher affinity for the core RNAP than for the holoenzyme. Its ATPase activity is stimulated by binding to RNAP.

Transcription regulator that activates transcription by stimulating RNA polymerase (RNAP) recycling in case of stress conditions such as supercoiled DNA or high salt concentrations. Probably acts by releasing the RNAP, when it is trapped or immobilized on tightly supercoiled DNA. Does not activate transcription on linear DNA. Probably not involved in DNA repair. This Aliivibrio salmonicida (strain LFI1238) (Vibrio salmonicida (strain LFI1238)) protein is RNA polymerase-associated protein RapA.